The following is a 172-amino-acid chain: Large ribosomal subunit protein uL10 (172 aa).

The protein belongs to the universal ribosomal protein uL10 family. As to quaternary structure, part of the ribosomal stalk of the 50S ribosomal subunit. The N-terminus interacts with L11 and the large rRNA to form the base of the stalk. The C-terminus forms an elongated spine to which L12 dimers bind in a sequential fashion forming a multimeric L10(L12)X complex.

Its function is as follows. Forms part of the ribosomal stalk, playing a central role in the interaction of the ribosome with GTP-bound translation factors. This Ruegeria sp. (strain TM1040) (Silicibacter sp.) protein is Large ribosomal subunit protein uL10.